We begin with the raw amino-acid sequence, 477 residues long: Delayed-rectifier potassium channel regulatory subunit KCNS2 (477 aa).

At 1–184 (MTRQSLWDLS…LALDNPGYSV (184 aa)) the chain is on the cytoplasmic side. A helical transmembrane segment spans residues 185–206 (LSRVFSVLSILVVLGSIITMCL). The Extracellular portion of the chain corresponds to 207–225 (NSLPDFQIPDSQGNPGEDP). Residues 226-248 (RFEIVEHFGIAWFTFELVARFAV) traverse the membrane as a helical segment. The Cytoplasmic segment spans residues 249–259 (APDFLKFFKNA). A helical membrane pass occupies residues 260–280 (LNLIDLMSIVPFYITLVVNLV). At 281–290 (VESSPTLANL) the chain is on the extracellular side. A helical; Voltage-sensor membrane pass occupies residues 291–311 (GRVAQVLRLMRIFRILKLARH). Topologically, residues 312-326 (STGLRSLGATLKYSY) are cytoplasmic. Residues 327–348 (KEVGLLLLYLSVGISIFSVVAY) traverse the membrane as a helical segment. The Extracellular portion of the chain corresponds to 349-361 (TIEKEENEGLATI). The helical intramembrane region spans 362–373 (PACWWWATVSMT). The Selectivity filter motif lies at 374–379 (TVGYGD). Residues 374-381 (TVGYGDVV) lie within the membrane without spanning it. The Extracellular segment spans residues 382-388 (PGTTAGK). The helical transmembrane segment at 389–417 (LTASACILAGILVVVLPITLIFNKFSHFY) threads the bilayer. The Cytoplasmic segment spans residues 418–477 (RRQKQLESAMRSCDFGDGMKEVPSVNLRDYYAHKVKSLMASLTNMSRSSPSELSLDDSLH).

Belongs to the potassium channel family. S (TC 1.A.1.2) subfamily. Kv9.2/KCNS2 sub-subfamily. As to quaternary structure, heterotetramer with KCNB1 and KCNB2. Does not form homomultimers. In terms of tissue distribution, detected in brain, lung and in pulmonary arteries.

It is found in the cell membrane. In terms of biological role, potassium channel regulatory subunit that modulate the delayed rectifier voltage-gated potassium channel activity of KCNB1 and KCNB2 by altering their kinetics, expression levels, and shifting the half-inactivation potential to more polarized values. While it does not form functional channels on its own, it can form functional heterotetrameric channels with KCNB1 and KCNB2. Each regulatory subunit has unique regulatory properties that can lead to extensive inhibition, significant changes in kinetics, and/or substantial shifts in the voltage dependencies of the inactivation process. The chain is Delayed-rectifier potassium channel regulatory subunit KCNS2 from Rattus norvegicus (Rat).